The chain runs to 502 residues: uncharacterized protein (502 aa).

This is an uncharacterized protein from Frog virus 3 (isolate Goorha) (FV-3).